Reading from the N-terminus, the 414-residue chain is Nucleoredoxin (414 aa).

Residues 131-305 (LLVKDDPEGL…ELNAVQLNEG (175 aa)) form the Thioredoxin domain.

Belongs to the nucleoredoxin family.

The protein resides in the cytoplasm. Its subcellular location is the cytosol. It localises to the nucleus. It catalyses the reaction [protein]-dithiol + NAD(+) = [protein]-disulfide + NADH + H(+). It carries out the reaction [protein]-dithiol + NADP(+) = [protein]-disulfide + NADPH + H(+). Functionally, functions as a redox-dependent negative regulator of the Wnt signaling pathway. The sequence is that of Nucleoredoxin (nxn) from Xenopus laevis (African clawed frog).